Here is a 338-residue protein sequence, read N- to C-terminus: Protein FosB (338 aa).

Disordered stretches follow at residues 1-54, 79-191, 222-276, and 316-338; these read MFQA…PGSF, MAQS…DQLE, CKIP…PPNL, and GAQRTSGSDQPSDPLNSPSLLAL. Composition is skewed to polar residues over residues 13–31 and 79–88; these read SRCSSSPSAESQYLSSVDS and MAQSQGQPLA. Serine 27 bears the Phosphoserine mark. The segment covering 113–124 has biased composition (gly residues); it reads SSGGASGSGGPS. Over residues 125–137 the composition is skewed to low complexity; the sequence is TSGTTSGPGPARP. The bZIP domain maps to 155-218; sequence EEKRRVRRER…ERLEFVLVAH (64 aa). A basic motif region spans residues 157–182; the sequence is KRRVRRERNKLAAAKCRNRRRELTDR. A leucine-zipper region spans residues 183–211; the sequence is LQAETDQLEEEKAELESEIAELQKEKERL. The span at 256–265 shows a compositional bias: pro residues; it reads LPPPPPPPLP. 2 stretches are compositionally biased toward polar residues: residues 266-276 and 318-338; these read FQTSQDAPPNL and QRTSGSDQPSDPLNSPSLLAL.

This sequence belongs to the bZIP family. Fos subfamily. As to quaternary structure, heterodimer; binds to DNA as heterodimer. Component of an AP-1 transcription factor complex; composed of FOS-JUN heterodimers. As part of the AP-1 transcription factor complex, forms heterodimers with JUN, JUNB or JUND, thereby binding to the AP-1 consensus sequence and stimulating transcription. Interacts with the BAF multiprotein chromatin-remodeling complex subunits SMARCB1 and SMARCD1. Interacts with ARID1A and JUN. Homodimer under oxidizing conditions and monomer under reducing conditions (in vitro). Heterodimer; binds to DNA as heterodimer. Forms heterodimers with JUNB, JUN or JUND; thereby binding to the AP-1 consensus sequence but does not stimulate transcription. Forms heterodimers with JUND under oxidizing conditions. Post-translationally, phosphorylated. Phosphorylated at Ser-27 by CSNK2A1; phosphorylation increases protein stability and transactivation potential. In terms of tissue distribution, expressed in the nucleus accumbens of the striatum (at protein level).

It localises to the nucleus. Its function is as follows. Heterodimerizes with proteins of the JUN family to form an AP-1 transcription factor complex, thereby enhancing their DNA binding activity to gene promoters containing an AP-1 consensus sequence 5'-TGA[GC]TCA-3' and enhancing their transcriptional activity. As part of the AP-1 complex, facilitates enhancer selection together with cell-type-specific transcription factors by collaboratively binding to nucleosomal enhancers and recruiting the SWI/SNF (BAF) chromatin remodeling complex to establish accessible chromatin. Together with JUN, plays a role in activation-induced cell death of T cells by binding to the AP-1 promoter site of FASLG/CD95L, and inducing its transcription in response to activation of the TCR/CD3 signaling pathway. Exhibits transactivation activity in vitro. Involved in the display of nurturing behavior towards newborns. May play a role in neurogenesis in the hippocampus and in learning and memory-related tasks by regulating the expression of various genes involved in neurogenesis, depression and epilepsy. Implicated in behavioral responses related to morphine reward and spatial memory. Functionally, exhibits lower transactivation activity than isoform 1 in vitro. The heterodimer with JUN does not display any transcriptional activity, and may thereby act as an transcriptional inhibitor. May be involved in the regulation of neurogenesis in the hippocampus. May play a role in synaptic modifications in nucleus accumbens medium spiny neurons and thereby play a role in adaptive and pathological reward-dependent learning, including maladaptive responses involved in drug addiction. Seems to be more stably expressed with a half-life of ~9.5 hours in cell culture as compared to 1.5 hours half-life of isoform 1. The chain is Protein FosB (FOSB) from Homo sapiens (Human).